A 448-amino-acid chain; its full sequence is Squalene synthase ERG9 (448 aa).

A helical membrane pass occupies residues 420–440 (RIEPGNFNCNVVLFGIGALIL).

It belongs to the phytoene/squalene synthase family. Mg(2+) is required as a cofactor.

Its subcellular location is the endoplasmic reticulum membrane. It is found in the microsome. It carries out the reaction 2 (2E,6E)-farnesyl diphosphate + NADPH + H(+) = squalene + 2 diphosphate + NADP(+). It catalyses the reaction 2 (2E,6E)-farnesyl diphosphate + NADH + H(+) = squalene + 2 diphosphate + NAD(+). The protein operates within terpene metabolism; lanosterol biosynthesis; lanosterol from farnesyl diphosphate: step 1/3. Squalene synthase; part of the third module of ergosterol biosynthesis pathway that includes the late steps of the pathway. ERG9 produces squalene from 2 farnesyl pyrophosphate moieties. The third module or late pathway involves the ergosterol synthesis itself through consecutive reactions that mainly occur in the endoplasmic reticulum (ER) membrane. Firstly, the squalene synthase ERG9 catalyzes the condensation of 2 farnesyl pyrophosphate moieties to form squalene, which is the precursor of all steroids. Squalene synthase is crucial for balancing the incorporation of farnesyl diphosphate (FPP) into sterol and nonsterol isoprene synthesis. Secondly, the squalene epoxidase ERG1 catalyzes the stereospecific oxidation of squalene to (S)-2,3-epoxysqualene, which is considered to be a rate-limiting enzyme in steroid biosynthesis. Then, the lanosterol synthase ERG7 catalyzes the cyclization of (S)-2,3 oxidosqualene to lanosterol, a reaction that forms the sterol core. In the next steps, lanosterol is transformed to zymosterol through a complex process involving various demethylation, reduction and desaturation reactions. The lanosterol 14-alpha-demethylase ERG11 (also known as CYP51) catalyzes C14-demethylation of lanosterol to produce 4,4'-dimethyl cholesta-8,14,24-triene-3-beta-ol, which is critical for ergosterol biosynthesis. The C-14 reductase ERG24 reduces the C14=C15 double bond of 4,4-dimethyl-cholesta-8,14,24-trienol to produce 4,4-dimethyl-cholesta-8,24-dienol. 4,4-dimethyl-cholesta-8,24-dienol is substrate of the C-4 demethylation complex ERG25-ERG26-ERG27 in which ERG25 catalyzes the three-step monooxygenation required for the demethylation of 4,4-dimethyl and 4alpha-methylsterols, ERG26 catalyzes the oxidative decarboxylation that results in a reduction of the 3-beta-hydroxy group at the C-3 carbon to an oxo group, and ERG27 is responsible for the reduction of the keto group on the C-3. ERG28 has a role as a scaffold to help anchor ERG25, ERG26 and ERG27 to the endoplasmic reticulum and ERG29 regulates the activity of the iron-containing C4-methylsterol oxidase ERG25. Then, the sterol 24-C-methyltransferase ERG6 catalyzes the methyl transfer from S-adenosyl-methionine to the C-24 of zymosterol to form fecosterol. The C-8 sterol isomerase ERG2 catalyzes the reaction which results in unsaturation at C-7 in the B ring of sterols and thus converts fecosterol to episterol. The sterol-C5-desaturase ERG3 then catalyzes the introduction of a C-5 double bond in the B ring to produce 5-dehydroepisterol. The C-22 sterol desaturase ERG5 further converts 5-dehydroepisterol into ergosta-5,7,22,24(28)-tetraen-3beta-ol by forming the C-22(23) double bond in the sterol side chain. Finally, ergosta-5,7,22,24(28)-tetraen-3beta-ol is substrate of the C-24(28) sterol reductase ERG4 to produce ergosterol. This chain is Squalene synthase ERG9, found in Candida albicans (Yeast).